Reading from the N-terminus, the 54-residue chain is Ovomucoid (54 aa).

Residues 4–54 enclose the Kazal-like domain; the sequence is VDCSDYPKPVCSPENMPVCGSDSKTYSNKCDFCNAVADSNGTLTLSHFGKC. Intrachain disulfides connect C6-C36, C14-C33, and C22-C54. N-linked (GlcNAc...) asparagine glycosylation occurs at N43.

It is found in the secreted. The chain is Ovomucoid from Nycticorax nycticorax (Black-crowned night-heron).